The sequence spans 1327 residues: Myb-like protein O (1327 aa).

Low complexity predominate over residues asparagine 131–lysine 142. Disordered regions lie at residues asparagine 131–asparagine 153, glutamate 263–serine 390, proline 504–serine 668, and lysine 717–aspartate 770. The segment covering glutamate 263–asparagine 283 has biased composition (acidic residues). Over residues tyrosine 322–asparagine 353 the composition is skewed to low complexity. The segment covering aspartate 356–aspartate 374 has biased composition (acidic residues). Low complexity predominate over residues serine 511 to lysine 532. The span at asparagine 533 to glutamate 542 shows a compositional bias: basic residues. The span at lysine 543 to arginine 554 shows a compositional bias: basic and acidic residues. The span at lysine 555–threonine 577 shows a compositional bias: basic residues. Residues serine 585–glutamate 606 are compositionally biased toward acidic residues. Residues glycine 607 to valine 619 are compositionally biased toward gly residues. Residues serine 624–serine 633 show a composition bias toward acidic residues. Composition is skewed to low complexity over residues histidine 646–serine 668 and glutamine 722–isoleucine 732. The segment covering asparagine 754 to aspartate 770 has biased composition (acidic residues). In terms of domain architecture, HTH myb-type spans asparagine 897 to serine 953. A DNA-binding region (H-T-H motif) is located at residues tryptophan 925–leucine 949. Residues lysine 959–glutamate 1010 enclose the Myb-like 1 domain. 2 stretches are compositionally biased toward low complexity: residues asparagine 1061 to asparagine 1118 and proline 1144 to proline 1160. Disordered regions lie at residues asparagine 1061 to glycine 1122 and proline 1144 to isoleucine 1168. Positions lysine 1268–leucine 1316 constitute a Myb-like 2 domain.

The protein resides in the nucleus. The protein is Myb-like protein O (mybO) of Dictyostelium discoideum (Social amoeba).